The sequence spans 224 residues: Ribonuclease 3 (224 aa).

Positions 4 to 127 constitute an RNase III domain; the sequence is IEKLEQSLTY…IIGAIHLEAG (124 aa). A Mg(2+)-binding site is contributed by Glu-40. The active site involves Asp-44. Mg(2+) is bound by residues Asp-113 and Glu-116. Residue Glu-116 is part of the active site. The DRBM domain occupies 154–223; the sequence is DYKTKLQEIT…AKIALEKLGA (70 aa).

It belongs to the ribonuclease III family. Homodimer. It depends on Mg(2+) as a cofactor.

It is found in the cytoplasm. The catalysed reaction is Endonucleolytic cleavage to 5'-phosphomonoester.. Functionally, digests double-stranded RNA. Involved in the processing of primary rRNA transcript to yield the immediate precursors to the large and small rRNAs (23S and 16S). Processes some mRNAs, and tRNAs when they are encoded in the rRNA operon. Processes pre-crRNA and tracrRNA of type II CRISPR loci if present in the organism. This is Ribonuclease 3 from Campylobacter jejuni subsp. jejuni serotype O:6 (strain 81116 / NCTC 11828).